The chain runs to 115 residues: T cell receptor beta variable 16 (115 aa).

An N-terminal signal peptide occupies residues 1–20 (MSPIFTCITILCLLAAGSPG). Residues 21 to 115 (EEVAQTPKHL…SAVYFCASSQ (95 aa)) enclose the Ig-like domain. The cysteines at positions 42 and 111 are disulfide-linked.

In terms of assembly, alpha-beta TR is a heterodimer composed of an alpha and beta chain; disulfide-linked. The alpha-beta TR is associated with the transmembrane signaling CD3 coreceptor proteins to form the TR-CD3 (TcR or TCR). The assembly of alpha-beta TR heterodimers with CD3 occurs in the endoplasmic reticulum where a single alpha-beta TR heterodimer associates with one CD3D-CD3E heterodimer, one CD3G-CD3E heterodimer and one CD247 homodimer forming a stable octameric structure. CD3D-CD3E and CD3G-CD3E heterodimers preferentially associate with TR alpha and TR beta chains, respectively. The association of the CD247 homodimer is the last step of TcR assembly in the endoplasmic reticulum and is required for transport to the cell surface.

Its subcellular location is the cell membrane. Its function is as follows. V region of the variable domain of T cell receptor (TR) beta chain that participates in the antigen recognition. Alpha-beta T cell receptors are antigen specific receptors which are essential to the immune response and are present on the cell surface of T lymphocytes. Recognize peptide-major histocompatibility (MH) (pMH) complexes that are displayed by antigen presenting cells (APC), a prerequisite for efficient T cell adaptive immunity against pathogens. Binding of alpha-beta TR to pMH complex initiates TR-CD3 clustering on the cell surface and intracellular activation of LCK that phosphorylates the ITAM motifs of CD3G, CD3D, CD3E and CD247 enabling the recruitment of ZAP70. In turn ZAP70 phosphorylates LAT, which recruits numerous signaling molecules to form the LAT signalosome. The LAT signalosome propagates signal branching to three major signaling pathways, the calcium, the mitogen-activated protein kinase (MAPK) kinase and the nuclear factor NF-kappa-B (NF-kB) pathways, leading to the mobilization of transcription factors that are critical for gene expression and essential for T cell growth and differentiation. The T cell repertoire is generated in the thymus, by V-(D)-J rearrangement. This repertoire is then shaped by intrathymic selection events to generate a peripheral T cell pool of self-MH restricted, non-autoaggressive T cells. Post-thymic interaction of alpha-beta TR with the pMH complexes shapes TR structural and functional avidity. The polypeptide is T cell receptor beta variable 16 (Homo sapiens (Human)).